The chain runs to 432 residues: Gamma-glutamyl phosphate reductase (432 aa).

Belongs to the gamma-glutamyl phosphate reductase family.

It is found in the cytoplasm. The catalysed reaction is L-glutamate 5-semialdehyde + phosphate + NADP(+) = L-glutamyl 5-phosphate + NADPH + H(+). The protein operates within amino-acid biosynthesis; L-proline biosynthesis; L-glutamate 5-semialdehyde from L-glutamate: step 2/2. Catalyzes the NADPH-dependent reduction of L-glutamate 5-phosphate into L-glutamate 5-semialdehyde and phosphate. The product spontaneously undergoes cyclization to form 1-pyrroline-5-carboxylate. This is Gamma-glutamyl phosphate reductase from Methylorubrum extorquens (strain CM4 / NCIMB 13688) (Methylobacterium extorquens).